The chain runs to 201 residues: Putative ankyrin repeat protein R868 (201 aa).

ANK repeat units lie at residues 125 to 154 and 156 to 188; these read YENNALNWASKYGFLEIVKLIMENKINCYF and KAKKAYQLAITYGHTDVVDFLKTYVNTNSDYNF.

The sequence is that of Putative ankyrin repeat protein R868 from Acanthamoeba polyphaga (Amoeba).